The primary structure comprises 431 residues: MANVVVVGAQWGDEGKGKIVDWLSERADVIARFQGGHNAGHTLVIDGEVFKLHALPSGVVRGGKLSVIGNGVVLDPWHLVKEIATIRDQGVDISPETLMIAENTPLILPIHGELDRAREEAASSGTKIGTTGRGIGPAYEDKVGRRSVRVADLADRATLEAHVDRALQHHDPLRRGLGIDPIDRNALIDALTEIAPQILQYAAPVWKVLNEKRKAGKRILFEGAQGALLDIDFGTYPFVTSSNVIAGQAATGVGLGPNAIDYTLGIVKAYTTRVGEGPFPTELEDADGQRLGERGHEFGTTTGRKRRCGWFDAALVRQTCATSGVTGISLTKLDVLDGFETLKICVGYDLDGTRLDYLPTAADQQARCTPIYEEMPGWSDSTEGARSWADLPAAAIKYVRRVEELIQCPVALLSTSPEREDTILVTDPFAD.

Residues 12–18 (GDEGKGK) and 40–42 (GHT) each bind GTP. Aspartate 13 functions as the Proton acceptor in the catalytic mechanism. Mg(2+) contacts are provided by aspartate 13 and glycine 40. Residues 13–16 (DEGK), 38–41 (NAGH), threonine 131, arginine 145, glutamine 225, threonine 240, and arginine 304 each bind IMP. Catalysis depends on histidine 41, which acts as the Proton donor. A substrate-binding site is contributed by 300-306 (TTTGRKR). GTP is bound by residues arginine 306, 332–334 (KLD), and 414–416 (STS).

The protein belongs to the adenylosuccinate synthetase family. As to quaternary structure, homodimer. Requires Mg(2+) as cofactor.

Its subcellular location is the cytoplasm. The enzyme catalyses IMP + L-aspartate + GTP = N(6)-(1,2-dicarboxyethyl)-AMP + GDP + phosphate + 2 H(+). The protein operates within purine metabolism; AMP biosynthesis via de novo pathway; AMP from IMP: step 1/2. Its function is as follows. Plays an important role in the de novo pathway of purine nucleotide biosynthesis. Catalyzes the first committed step in the biosynthesis of AMP from IMP. The chain is Adenylosuccinate synthetase from Jannaschia sp. (strain CCS1).